We begin with the raw amino-acid sequence, 656 residues long: Tetratricopeptide repeat protein 30 homolog (656 aa).

9 TPR repeats span residues 9-42 (EGEFTSTIYTLIHEHKFNDAIRILQYQHERNPKN), 43-76 (LAALSLLAYCYYYTQDFMNAADCYSQLSYNFPQY), 141-174 (AAVIINTACIDYKEGNYEEALKKFNEATEFSGYQ), 176-208 (GLAYSIALCHYRRGDYDSALKLISEIINRGVKD), 238-271 (IEAFNLKFAIYYRTKDFKAAKESLTDMPPRNEHD), 378-412 (RKTAIEIQIKKEQKTTDSDDSLEMRNLIESYDDSL), 416-449 (LPVLMTYAKYYWDKRDYQAVEKLFRNSVDYCKEH), 451-484 (TWKLNVAHTIFMQEKKYKDAAAFYEPIVHKKYDD), and 537-570 (SIISLVIGSLYCSKGNFEFGISRVVKALEPPEKK).

It belongs to the TTC30/dfy-1/fleer family. In terms of assembly, component of the IFT complex B composed of at least che-2, che-13, dyf-1, dyf-3, dyf-6, dyf-11, dyf-13, ift-20, ift-74, ift-81, ifta-2, osm-1, osm-5 and osm-6. Expressed in most amphid, both phasmid and several labial-quadrant neurons.

Its subcellular location is the cell projection. The protein resides in the cilium. Functionally, plays a role in anterograde intraflagellar transport (IFT), the process by which cilia precursors are transported from the base of the cilium to the site of their incorporation at the tip. Specifically required for the kinesin osm-3 to dock onto and move the IFT particles which contain these precursors. Component of the intraflagellar transport (IFT) complex B required for transport of proteins in the motile cilium. May be required for ciliary entrance and transport of specific ciliary cargo proteins such as che-3 which are related to motility. Required for polyglutamylation of axonemal tubulin in sensory cilia. The chain is Tetratricopeptide repeat protein 30 homolog from Caenorhabditis elegans.